The following is a 53-amino-acid chain: UPF0391 membrane protein Bxeno_A1464 (53 aa).

Transmembrane regions (helical) follow at residues 5 to 25 (AAIF…GIAA) and 30 to 50 (IAKV…LMGV).

It belongs to the UPF0391 family.

Its subcellular location is the cell membrane. The sequence is that of UPF0391 membrane protein Bxeno_A1464 from Paraburkholderia xenovorans (strain LB400).